A 349-amino-acid polypeptide reads, in one-letter code: UDP-N-acetylenolpyruvoylglucosamine reductase (349 aa).

Residues 24 to 197 form the FAD-binding PCMH-type domain; the sequence is FGIDATARFA…VAVTFRLPKR (174 aa). Residue R173 is part of the active site. S249 serves as the catalytic Proton donor. E345 is an active-site residue.

This sequence belongs to the MurB family. FAD is required as a cofactor.

It is found in the cytoplasm. It carries out the reaction UDP-N-acetyl-alpha-D-muramate + NADP(+) = UDP-N-acetyl-3-O-(1-carboxyvinyl)-alpha-D-glucosamine + NADPH + H(+). It participates in cell wall biogenesis; peptidoglycan biosynthesis. Functionally, cell wall formation. The sequence is that of UDP-N-acetylenolpyruvoylglucosamine reductase from Burkholderia ambifaria (strain MC40-6).